Reading from the N-terminus, the 217-residue chain is UPF0502 protein PFLU_2135 (217 aa).

It belongs to the UPF0502 family.

This Pseudomonas fluorescens (strain SBW25) protein is UPF0502 protein PFLU_2135.